A 479-amino-acid polypeptide reads, in one-letter code: Glutamate--tRNA ligase (479 aa).

Positions 9–19 match the 'HIGH' region motif; that stretch reads PSPTGLFHIGT. Residues 248 to 252 carry the 'KMSKS' region motif; that stretch reads KLSKR. Lys251 is a binding site for ATP.

The protein belongs to the class-I aminoacyl-tRNA synthetase family. Glutamate--tRNA ligase type 1 subfamily. In terms of assembly, monomer.

The protein localises to the cytoplasm. It catalyses the reaction tRNA(Glu) + L-glutamate + ATP = L-glutamyl-tRNA(Glu) + AMP + diphosphate. Catalyzes the attachment of glutamate to tRNA(Glu) in a two-step reaction: glutamate is first activated by ATP to form Glu-AMP and then transferred to the acceptor end of tRNA(Glu). The sequence is that of Glutamate--tRNA ligase from Prochlorococcus marinus (strain MIT 9215).